We begin with the raw amino-acid sequence, 1068 residues long: Phosphatidylinositol 4,5-bisphosphate 3-kinase catalytic subunit alpha isoform (1068 aa).

In terms of domain architecture, PI3K-ABD spans 16–105; it reads MPPRILVECL…QPFLKVIEPV (90 aa). The region spanning 187–289 is the PI3K-RBD domain; that stretch reads KGQIIVVIWV…GRMPNLMLMA (103 aa). In terms of domain architecture, C2 PI3K-type spans 330 to 487; it reads INSALRIKIL…DWFSSVVKFP (158 aa). In terms of domain architecture, PIK helical spans 517–694; the sequence is LARDNELREN…GLLLESYCRA (178 aa). Residues 765–1051 enclose the PI3K/PI4K catalytic domain; sequence RLEECRIMSS…QMNDAHHGGW (287 aa). A G-loop region spans residues 771 to 777; sequence IMSSAKR. Residues 912–920 are catalytic loop; that stretch reads GIGDRHNSN. Positions 931 to 957 are activation loop; that stretch reads HIDFGHFLDHKKKKFGYKRERVPFVLT.

Belongs to the PI3/PI4-kinase family. In terms of assembly, heterodimer of a catalytic subunit PIK3CA and a p85 regulatory subunit (PIK3R1, PIK3R2 or PIK3R3). Interacts with IRS1 in nuclear extracts. Interacts with RUFY3. Interacts with RASD2. Interacts with APPL1. Interacts with HRAS and KRAS. Interaction with HRAS/KRAS is required for PI3K pathway signaling and cell proliferation stimulated by EGF and FGF2. Interacts with FAM83B; activates the PI3K/AKT signaling cascade.

It catalyses the reaction a 1,2-diacyl-sn-glycero-3-phospho-(1D-myo-inositol-4,5-bisphosphate) + ATP = a 1,2-diacyl-sn-glycero-3-phospho-(1D-myo-inositol-3,4,5-trisphosphate) + ADP + H(+). The catalysed reaction is a 1,2-diacyl-sn-glycero-3-phospho-(1D-myo-inositol) + ATP = a 1,2-diacyl-sn-glycero-3-phospho-(1D-myo-inositol-3-phosphate) + ADP + H(+). The enzyme catalyses L-seryl-[protein] + ATP = O-phospho-L-seryl-[protein] + ADP + H(+). It carries out the reaction 1,2-dioctanoyl-sn-glycero-3-phospho-(1D-myo-inositol-4,5-bisphosphate) + ATP = 1,2-dioctanoyl-sn-glycero-3-phospho-(1D-myo-inositol-3,4,5-trisphosphate) + ADP + H(+). It catalyses the reaction 1-octadecanoyl-2-(5Z,8Z,11Z,14Z)-eicosatetraenoyl-sn-glycero-3-phospho-1D-myo-inositol 4,5-bisphosphate + ATP = 1-octadecanoyl-2-(5Z,8Z,11Z,14Z-eicosatetraenoyl)-sn-glycero-3-phospho-(1D-myo-inositol 3,4,5-triphosphate) + ADP + H(+). It participates in phospholipid metabolism; phosphatidylinositol phosphate biosynthesis. In terms of biological role, phosphoinositide-3-kinase (PI3K) phosphorylates phosphatidylinositol (PI) and its phosphorylated derivatives at position 3 of the inositol ring to produce 3-phosphoinositides. Uses ATP and PtdIns(4,5)P2 (phosphatidylinositol 4,5-bisphosphate) to generate phosphatidylinositol 3,4,5-trisphosphate (PIP3). PIP3 plays a key role by recruiting PH domain-containing proteins to the membrane, including AKT1 and PDPK1, activating signaling cascades involved in cell growth, survival, proliferation, motility and morphology. Participates in cellular signaling in response to various growth factors. Involved in the activation of AKT1 upon stimulation by receptor tyrosine kinases ligands such as EGF, insulin, IGF1, VEGFA and PDGF. Involved in signaling via insulin-receptor substrate (IRS) proteins. Essential in endothelial cell migration during vascular development through VEGFA signaling, possibly by regulating RhoA activity. Required for lymphatic vasculature development, possibly by binding to RAS and by activation by EGF and FGF2, but not by PDGF. Regulates invadopodia formation through the PDPK1-AKT1 pathway. Participates in cardiomyogenesis in embryonic stem cells through a AKT1 pathway. Participates in vasculogenesis in embryonic stem cells through PDK1 and protein kinase C pathway. Also has serine-protein kinase activity: phosphorylates PIK3R1 (p85alpha regulatory subunit), EIF4EBP1 and HRAS. Plays a role in the positive regulation of phagocytosis and pinocytosis. In Mus musculus (Mouse), this protein is Phosphatidylinositol 4,5-bisphosphate 3-kinase catalytic subunit alpha isoform (Pik3ca).